Reading from the N-terminus, the 357-residue chain is UPF0744 protein C106.03 (357 aa).

Residue serine 282 is modified to Phosphoserine.

The protein belongs to the UPF0744 family.

It localises to the cytoplasm. The protein is UPF0744 protein C106.03 of Schizosaccharomyces pombe (strain 972 / ATCC 24843) (Fission yeast).